The primary structure comprises 398 residues: MDTQAFRRSLHHSDRYNRRGFDSPTKRAQALEEAYQSDLISSIRDNGFTYTKGRLNIKLAQAFGFCWGVERAVAMAYETRRHYPNENIWITNEIIHNPSVNDHLRKMNVKFISAKNGIKDFSLVSNGDVVILPAFGATVQEMKLLHEKGCHIIDTTCPWVSKVWHTVEKHKKHVFTSIIHGKFKHEETLATSSFAGKYLVVLDLEEANYVSEYILGRGNRNEFMNKFAKACSNGFDPDKDLERVGVANQTTMLKSETEEIGKVFERTMLKKFGPENLNSHFLAFNTICDATEERQDAMFSLVDEDLDILVVIGGFNSSNTTHLQEIAITKNISSFHIDTPERISVKENSIFHKPLGSELELKNNFLPSGKINVGITSGASTPDKVVADVIEKLIDIAS.

Cys-66 contacts [4Fe-4S] cluster. His-96 is a binding site for (2E)-4-hydroxy-3-methylbut-2-enyl diphosphate. Dimethylallyl diphosphate is bound at residue His-96. Isopentenyl diphosphate is bound at residue His-96. Cys-157 contacts [4Fe-4S] cluster. A (2E)-4-hydroxy-3-methylbut-2-enyl diphosphate-binding site is contributed by His-185. Residue His-185 coordinates dimethylallyl diphosphate. His-185 serves as a coordination point for isopentenyl diphosphate. The active-site Proton donor is the Glu-187. Thr-250 contacts (2E)-4-hydroxy-3-methylbut-2-enyl diphosphate. [4Fe-4S] cluster is bound at residue Cys-288. (2E)-4-hydroxy-3-methylbut-2-enyl diphosphate contacts are provided by Ser-317, Ser-318, Asn-319, and Ser-380. Dimethylallyl diphosphate is bound by residues Ser-317, Ser-318, Asn-319, and Ser-380. Ser-317, Ser-318, Asn-319, and Ser-380 together coordinate isopentenyl diphosphate.

This sequence belongs to the IspH family. The cofactor is [4Fe-4S] cluster.

The catalysed reaction is isopentenyl diphosphate + 2 oxidized [2Fe-2S]-[ferredoxin] + H2O = (2E)-4-hydroxy-3-methylbut-2-enyl diphosphate + 2 reduced [2Fe-2S]-[ferredoxin] + 2 H(+). The enzyme catalyses dimethylallyl diphosphate + 2 oxidized [2Fe-2S]-[ferredoxin] + H2O = (2E)-4-hydroxy-3-methylbut-2-enyl diphosphate + 2 reduced [2Fe-2S]-[ferredoxin] + 2 H(+). The protein operates within isoprenoid biosynthesis; dimethylallyl diphosphate biosynthesis; dimethylallyl diphosphate from (2E)-4-hydroxy-3-methylbutenyl diphosphate: step 1/1. It participates in isoprenoid biosynthesis; isopentenyl diphosphate biosynthesis via DXP pathway; isopentenyl diphosphate from 1-deoxy-D-xylulose 5-phosphate: step 6/6. Catalyzes the conversion of 1-hydroxy-2-methyl-2-(E)-butenyl 4-diphosphate (HMBPP) into a mixture of isopentenyl diphosphate (IPP) and dimethylallyl diphosphate (DMAPP). Acts in the terminal step of the DOXP/MEP pathway for isoprenoid precursor biosynthesis. This Prochlorococcus marinus (strain MIT 9301) protein is 4-hydroxy-3-methylbut-2-enyl diphosphate reductase.